A 163-amino-acid polypeptide reads, in one-letter code: Homoaconitase small subunit (163 aa).

It belongs to the LeuD family. Heterodimer of HacA and HacB.

The catalysed reaction is (2R,3S)-homoisocitrate = cis-homoaconitate + H2O. It participates in amino-acid biosynthesis; L-lysine biosynthesis via AAA pathway; L-alpha-aminoadipate from 2-oxoglutarate: step 3/5. Its activity is regulated as follows. Is not inhibited by lysine. Functionally, catalyzes the reversible hydration of cis-homoaconitate ((Z)-but-1-ene-1,2,4-tricarboxylate) to homoisocitrate ((1R,2S)-1-hydroxybutane-1,2,4-tricarboxylate). Can catalyze neither the dehydration of (R)-homocitrate ((2R)-2-hydroxybutane-1,2,4-tricarboxylate) into cis-homoaconitate in vitro, nor the reverse reaction. Is not active toward (S)-homocitrate, cis-aconitate or citrate as substrate. The chain is Homoaconitase small subunit (hacB) from Thermus thermophilus (strain ATCC BAA-163 / DSM 7039 / HB27).